The sequence spans 173 residues: Crossover junction endodeoxyribonuclease RuvC (173 aa).

Catalysis depends on residues aspartate 8, glutamate 69, and aspartate 141. Residues aspartate 8, glutamate 69, and aspartate 141 each contribute to the Mg(2+) site.

It belongs to the RuvC family. Homodimer which binds Holliday junction (HJ) DNA. The HJ becomes 2-fold symmetrical on binding to RuvC with unstacked arms; it has a different conformation from HJ DNA in complex with RuvA. In the full resolvosome a probable DNA-RuvA(4)-RuvB(12)-RuvC(2) complex forms which resolves the HJ. Mg(2+) is required as a cofactor.

It localises to the cytoplasm. The catalysed reaction is Endonucleolytic cleavage at a junction such as a reciprocal single-stranded crossover between two homologous DNA duplexes (Holliday junction).. In terms of biological role, the RuvA-RuvB-RuvC complex processes Holliday junction (HJ) DNA during genetic recombination and DNA repair. Endonuclease that resolves HJ intermediates. Cleaves cruciform DNA by making single-stranded nicks across the HJ at symmetrical positions within the homologous arms, yielding a 5'-phosphate and a 3'-hydroxyl group; requires a central core of homology in the junction. The consensus cleavage sequence is 5'-(A/T)TT(C/G)-3'. Cleavage occurs on the 3'-side of the TT dinucleotide at the point of strand exchange. HJ branch migration catalyzed by RuvA-RuvB allows RuvC to scan DNA until it finds its consensus sequence, where it cleaves and resolves the cruciform DNA. This chain is Crossover junction endodeoxyribonuclease RuvC, found in Xylella fastidiosa (strain Temecula1 / ATCC 700964).